The chain runs to 505 residues: MVRIMLMHAVRAWRSADDFPCTEHMAYKIAQVAADPVDVDPEVADMVCNRIIDNAAVSAASMVRRPVTVARHQALAHPVRHGAKVFGVEGSYSADWAAWANGVAARELDFHDTFLAADYSHPADNIPPLVAVAQQLGVCGAELIRGLVTAYEIHIDLTRGICLHEHKIDHVAHLGPAVAAGIGTMLRLDQETIYHAIGQALHLTTSTRQSRKGAISSWKAFAPAHAGKVGIEAVDRAMRGEGSPAPIWEGEDGVIAWLLAGPEHTYRVPLPAPGEPKRAILDSYTKQHSAEYQSQAPIDLACRLRERIGDLDQIASIVLHTSHHTHVVIGTGSGDPQKFDPDASRETLDHSLPYIFAVALQDGCWHHERSYAPERARRSDTVALWHKISTVEDPEWTRRYHCADPAKKAFGARAEVTLHSGEVIVDELAVADAHPLGTRPFERKQYVEKFTELADGVVEPVEQQRFLAVVESLADLESGAVGGLNVLVDPRVLDKAPVIPPGIFR.

This sequence belongs to the PrpD family. In terms of assembly, monomer.

It catalyses the reaction (2S,3S)-2-methylcitrate = 2-methyl-cis-aconitate + H2O. It carries out the reaction citrate = D-threo-isocitrate. Its pathway is organic acid metabolism; propanoate degradation. It functions in the pathway carbohydrate metabolism; tricarboxylic acid cycle; isocitrate from oxaloacetate: step 1/2. Its function is as follows. Involved in the catabolism of short chain fatty acids (SCFA) via the tricarboxylic acid (TCA)(acetyl degradation route) and via the 2-methylcitrate cycle I (propionate degradation route). Catalyzes the dehydration of 2-methylcitrate (2-MC) to yield the cis isomer of 2-methyl-aconitate. Could also catalyze the dehydration of citrate and the hydration of cis-aconitate. In Mycobacterium tuberculosis (strain ATCC 35801 / TMC 107 / Erdman), this protein is 2-methylcitrate dehydratase.